A 297-amino-acid chain; its full sequence is tRNA dimethylallyltransferase (297 aa).

Residue Gly-15–Ser-22 participates in ATP binding. Thr-17–Ser-22 is a substrate binding site. Interaction with substrate tRNA regions lie at residues Asp-40–Gln-43 and Gln-164–Arg-168.

The protein belongs to the IPP transferase family. Monomer. It depends on Mg(2+) as a cofactor.

The catalysed reaction is adenosine(37) in tRNA + dimethylallyl diphosphate = N(6)-dimethylallyladenosine(37) in tRNA + diphosphate. In terms of biological role, catalyzes the transfer of a dimethylallyl group onto the adenine at position 37 in tRNAs that read codons beginning with uridine, leading to the formation of N6-(dimethylallyl)adenosine (i(6)A). In Rhizobium etli (strain ATCC 51251 / DSM 11541 / JCM 21823 / NBRC 15573 / CFN 42), this protein is tRNA dimethylallyltransferase.